Reading from the N-terminus, the 208-residue chain is MKTLVILSSILGDRSHSKQLADHLIQRLRQHEPDGSIRVRDLAADPVPYFDGATAGALFTPADQRTAEQAAIVARSDALVAELFDADRIVFAVPVYNFGLPAQLKSYIDQIARAGVTFRYTAQGVPEGLLKNKQVVVLSARGGKAEGTPADTLTPYLAQVLGFVGLVDPVFISAEGMAMGELAAQDGLALARQRIDALVAGAPQQVAA.

Residues Ser-9 and 15 to 17 (SHS) each bind FMN.

This sequence belongs to the azoreductase type 1 family. Homodimer. The cofactor is FMN.

It carries out the reaction 2 a quinone + NADH + H(+) = 2 a 1,4-benzosemiquinone + NAD(+). It catalyses the reaction N,N-dimethyl-1,4-phenylenediamine + anthranilate + 2 NAD(+) = 2-(4-dimethylaminophenyl)diazenylbenzoate + 2 NADH + 2 H(+). Its function is as follows. Quinone reductase that provides resistance to thiol-specific stress caused by electrophilic quinones. Also exhibits azoreductase activity. Catalyzes the reductive cleavage of the azo bond in aromatic azo compounds to the corresponding amines. This chain is FMN-dependent NADH:quinone oxidoreductase, found in Bordetella petrii (strain ATCC BAA-461 / DSM 12804 / CCUG 43448).